The sequence spans 310 residues: GPN-loop GTPase 2 (310 aa).

At A2 the chain carries N-acetylalanine. 19–24 (GSGKTT) lines the GTP pocket. A Gly-Pro-Asn (GPN)-loop; involved in dimer interface motif is present at residues 76-78 (GPN). 178-181 (SKMD) is a GTP binding site.

This sequence belongs to the GPN-loop GTPase family. Heterodimers with GPN1 or GPN3. Binds to RNA polymerase II (RNAPII).

In terms of biological role, small GTPase required for proper localization of RNA polymerase II and III (RNAPII and RNAPIII). May act at an RNAP assembly step prior to nuclear import. The chain is GPN-loop GTPase 2 (GPN2) from Bos taurus (Bovine).